The primary structure comprises 279 residues: Eukaryotic translation initiation factor 3 subunit G (279 aa).

3 disordered regions span residues 1 to 26 (MSTGLLDSWADAGDEFSAPPEVIANP), 66 to 115 (RKNW…KAHE), and 152 to 171 (TPSGTTPEPTSEGGAGAAGA). Position 78 is a phosphoserine (Ser-78). Residues 102 to 115 (KQDEKKEEEDKAHE) are compositionally biased toward basic and acidic residues. Residues 152 to 163 (TPSGTTPEPTSE) are compositionally biased toward low complexity. In terms of domain architecture, RRM spans 197-276 (TTLKVSQLNS…LILHLEWSKK (80 aa)).

This sequence belongs to the eIF-3 subunit G family. Component of the eukaryotic translation initiation factor 3 (eIF-3) complex.

The protein resides in the cytoplasm. Functionally, RNA-binding component of the eukaryotic translation initiation factor 3 (eIF-3) complex, which is involved in protein synthesis of a specialized repertoire of mRNAs and, together with other initiation factors, stimulates binding of mRNA and methionyl-tRNAi to the 40S ribosome. The eIF-3 complex specifically targets and initiates translation of a subset of mRNAs involved in cell proliferation. This subunit can bind 18S rRNA. The sequence is that of Eukaryotic translation initiation factor 3 subunit G from Candida albicans (strain SC5314 / ATCC MYA-2876) (Yeast).